A 263-amino-acid polypeptide reads, in one-letter code: L-aspartate dehydrogenase (263 aa).

Residues Ala120 and Asn186 each coordinate NAD(+). The active site involves His216.

It belongs to the L-aspartate dehydrogenase family.

The enzyme catalyses L-aspartate + NADP(+) + H2O = oxaloacetate + NH4(+) + NADPH + H(+). It catalyses the reaction L-aspartate + NAD(+) + H2O = oxaloacetate + NH4(+) + NADH + H(+). It functions in the pathway cofactor biosynthesis; NAD(+) biosynthesis; iminoaspartate from L-aspartate (dehydrogenase route): step 1/1. In terms of biological role, specifically catalyzes the NAD or NADP-dependent dehydrogenation of L-aspartate to iminoaspartate. In Psychrobacter cryohalolentis (strain ATCC BAA-1226 / DSM 17306 / VKM B-2378 / K5), this protein is L-aspartate dehydrogenase.